Reading from the N-terminus, the 407-residue chain is Probable tRNA sulfurtransferase (407 aa).

The 105-residue stretch at 61 to 165 (NEITYRLSKI…LDAIYMYEEV (105 aa)) folds into the THUMP domain. Residues 183–184 (ML), 208–209 (HF), R265, G287, and Q296 each bind ATP.

Belongs to the ThiI family.

It is found in the cytoplasm. It carries out the reaction [ThiI sulfur-carrier protein]-S-sulfanyl-L-cysteine + a uridine in tRNA + 2 reduced [2Fe-2S]-[ferredoxin] + ATP + H(+) = [ThiI sulfur-carrier protein]-L-cysteine + a 4-thiouridine in tRNA + 2 oxidized [2Fe-2S]-[ferredoxin] + AMP + diphosphate. It catalyses the reaction [ThiS sulfur-carrier protein]-C-terminal Gly-Gly-AMP + S-sulfanyl-L-cysteinyl-[cysteine desulfurase] + AH2 = [ThiS sulfur-carrier protein]-C-terminal-Gly-aminoethanethioate + L-cysteinyl-[cysteine desulfurase] + A + AMP + 2 H(+). The protein operates within cofactor biosynthesis; thiamine diphosphate biosynthesis. Its function is as follows. Catalyzes the ATP-dependent transfer of a sulfur to tRNA to produce 4-thiouridine in position 8 of tRNAs, which functions as a near-UV photosensor. Also catalyzes the transfer of sulfur to the sulfur carrier protein ThiS, forming ThiS-thiocarboxylate. This is a step in the synthesis of thiazole, in the thiamine biosynthesis pathway. The sulfur is donated as persulfide by IscS. The chain is Probable tRNA sulfurtransferase from Staphylococcus aureus (strain Mu3 / ATCC 700698).